The following is a 207-amino-acid chain: Glycerol-3-phosphate acyltransferase (207 aa).

5 consecutive transmembrane segments (helical) span residues 3–23, 54–74, 81–101, 122–142, and 158–178; these read LIGL…VWVG, TIVM…PIVF, GTAT…VSIF, PIMF…TSIV, and LVFQ…FVFY.

Belongs to the PlsY family. As to quaternary structure, probably interacts with PlsX.

Its subcellular location is the cell membrane. It carries out the reaction an acyl phosphate + sn-glycerol 3-phosphate = a 1-acyl-sn-glycero-3-phosphate + phosphate. It participates in lipid metabolism; phospholipid metabolism. Functionally, catalyzes the transfer of an acyl group from acyl-phosphate (acyl-PO(4)) to glycerol-3-phosphate (G3P) to form lysophosphatidic acid (LPA). This enzyme utilizes acyl-phosphate as fatty acyl donor, but not acyl-CoA or acyl-ACP. The chain is Glycerol-3-phosphate acyltransferase from Levilactobacillus brevis (strain ATCC 367 / BCRC 12310 / CIP 105137 / JCM 1170 / LMG 11437 / NCIMB 947 / NCTC 947) (Lactobacillus brevis).